The sequence spans 546 residues: Nicotinic acid-CoA ligase olcI (546 aa).

194–205 is a binding site for AMP; that stretch reads MFSTSGTSGLPK. Residues 445–523 are AMP-binding; the sequence is EIEAVLLKDP…ESLPRTGIGK (79 aa).

Belongs to the ATP-dependent AMP-binding enzyme family.

It carries out the reaction nicotinate + ATP + CoA = nicotinyl-CoA + AMP + diphosphate. It functions in the pathway secondary metabolite biosynthesis; terpenoid biosynthesis. Its function is as follows. Nicotinic acid-CoA ligase; part of the gene cluster that mediates the biosynthesis of 15-deoxyoxalicine B. The first step of the pathway is the synthesis of nicotinyl-CoA from nicotinic acid by the nicotinic acid-CoA ligase olcI. Nicotinyl-CoA is then a substrate of polyketide synthase olcA to produce 4-hydroxy-6-(3-pyridinyl)-2H-pyran-2-one (HPPO) which is further prenylated by the polyprenyl transferase olcH to yield geranylgeranyl-HPPO. Geranylgeranyl pyrophosphate is provided by the cluster-specific geranylgeranyl pyrophosphate synthase olcC. The FAD-dependent monooxygenase olcE catalyzes the epoxidation of geranylgeranyl-HPPO and the terpene cyclase olcD catalyzes the cyclization of the terpenoid component, resulting in the formation of the tricyclic terpene moiety seen in predecaturin E. The cytochrome P450 monooxygenase then catalyzes the allylic oxidation of predecaturin E, which is followed by spirocylization with concomitant loss of one molecule of water to form decaturin E. Decaturin E is the substrate of the cytochrome P450 monooxygenase olcJ which hydroxylates it at the C-29 position to form decaturin F. The short-chain dehydrogenase/reductase olcF may catalyze the oxidation of decaturin F to generate the 29-hydroxyl-27-one intermediate, and subsequent hemiacetal formation probably leads to the formation of decaturin C. The dioxygenase olcK may be a peroxisomal enzyme that catalyzes the hydroxylation of decaturin C into decaturin A once decaturin C is shuttled into the peroxisome by the MFS transporter olcL. Finally the cytochrome P450 monooxygenase olcB catalyzes the oxidative rearrangement to yield 15-deoxyoxalicine B. In the absence of olcJ, decaturin E may be shunted to a pathway in which it is oxidized to a ketone, possibly by olcF, to form decaturin D, which undergoes further allylic oxidation to yield decaturin G. Moreover, in the absence of oclK or oclL, oclB can convert decaturin C into 15-deoxyoxalicine A. The protein is Nicotinic acid-CoA ligase olcI of Penicillium canescens.